The sequence spans 414 residues: MSGIIATYLIHDDSHNLEKKAEQIALGLTIGSWTHLPHLLQEQLKQHKGNVIHVEELAEHEHTNSYLRKKVKRGIIKIEYPLLNFSPDLPAILTTTFGKLSLDGEVKLIDLTFSDELKKHFPGPKFGIDGIRNLLQVHDRPLLMSIFKGMIGRNIGYLKTQLRDQAIGGVDIVKDDEILFENALTPLTKRIVSGKEVLQSVYETYGHKTLYAVNLTGRTFDLKENAKRAVQAGADILLFNVFSYGLDVLQSLAEDDEIPVPIMAHPAVSGAYSASKLYGVSSPLLLGKLLRYAGADFSLFPSPYGSVALEKEEALAISKYLTEDDAFFKKSFSVPSAGIHPGFVPFIVRDFGKDVVINAGGGIHGHPNGAQGGGKAFRAAIDATLQNKPLHEVDDINLHSALQIWGNPSHEVKL.

Lysine 99 acts as the Proton acceptor in catalysis. Residues lysine 148, lysine 174–glutamate 177, histidine 265, glycine 338, and glycine 360–glycine 361 contribute to the substrate site. Lysine 174, aspartate 176, and glutamate 177 together coordinate Mg(2+). Lysine 174 bears the N6-carboxylysine mark.

Belongs to the RuBisCO large chain family. Type IV subfamily. Homodimer. Mg(2+) is required as a cofactor.

The enzyme catalyses 5-methylsulfanyl-2,3-dioxopentyl phosphate = 2-hydroxy-5-methylsulfanyl-3-oxopent-1-enyl phosphate. The protein operates within amino-acid biosynthesis; L-methionine biosynthesis via salvage pathway; L-methionine from S-methyl-5-thio-alpha-D-ribose 1-phosphate: step 3/6. Catalyzes the enolization of 2,3-diketo-5-methylthiopentyl-1-phosphate (DK-MTP-1-P) into 2-hydroxy-3-keto-5-methylthiopentenyl-1-phosphate (HK-MTPenyl-1-P). This Bacillus cereus (strain AH187) protein is 2,3-diketo-5-methylthiopentyl-1-phosphate enolase.